The primary structure comprises 68 residues: Adipokinetic prohormone type 1 (68 aa).

A signal peptide spans M1–A20. Q21 carries the post-translational modification Pyrrolidone carboxylic acid. G30 bears the Glycine amide mark. Residues G34–P68 constitute a propeptide that is removed on maturation.

Expressed in antennal lobe (AL), corpora cardiaca (CC), corpora allata (CA) and gnathal ganglion (GNG) (at protein level). Expression in CC and CA detected in all animals, expression in GNG in some animals and in AL in few animals (at protein level).

It is found in the secreted. Functionally, this hormone, released from cells in the corpora cardiaca, causes release of diglycerides from the fat body and stimulation of muscles to use these diglycerides as an energy source during energy-demanding processes. This Agrotis ipsilon (Black cutworm moth) protein is Adipokinetic prohormone type 1.